A 273-amino-acid chain; its full sequence is (5R)-carbapenem-3-carboxylate synthase (273 aa).

Residues H101 and D103 each contribute to the Fe cation site. G104 contacts substrate. Position 130 (T130) interacts with 2-oxoglutarate. Residue H251 coordinates Fe cation. 2-oxoglutarate contacts are provided by R253, R263, and R267.

This sequence belongs to the TfdA dioxygenase family. In terms of assembly, homohexamer. Dimer of trimers. It depends on Fe(2+) as a cofactor.

The protein localises to the cytoplasm. It carries out the reaction (3S,5S)-carbapenam-3-caboxylate + 2-oxoglutarate + O2 = (5R)-carbapenem-3-carboxylate + succinate + CO2 + H2O. Its activity is regulated as follows. Inhibited by L-N-acetylproline and by D-N-acetylproline. Catalyzes the Fe(2+) and alpha-ketoglutarate-dependent conversion of (3S,5S)-carbapenam to (5R)-carbapenem, an essential step in carbapenem antibiotic biosynthesis. The polypeptide is (5R)-carbapenem-3-carboxylate synthase (carC) (Pectobacterium carotovorum subsp. carotovorum (Erwinia carotovora subsp. carotovora)).